Reading from the N-terminus, the 386-residue chain is Galactokinase (386 aa).

A substrate-binding site is contributed by 35–38 (EHTD). ATP contacts are provided by residues Ser69 and 125 to 131 (GAGLSSS). Positions 131 and 163 each coordinate Mg(2+). Asp175 (proton acceptor) is an active-site residue. Residue Tyr224 coordinates substrate.

It belongs to the GHMP kinase family. GalK subfamily.

The protein resides in the cytoplasm. It carries out the reaction alpha-D-galactose + ATP = alpha-D-galactose 1-phosphate + ADP + H(+). The protein operates within carbohydrate metabolism; galactose metabolism. Functionally, catalyzes the transfer of the gamma-phosphate of ATP to D-galactose to form alpha-D-galactose-1-phosphate (Gal-1-P). The sequence is that of Galactokinase from Vibrio vulnificus (strain YJ016).